Reading from the N-terminus, the 252-residue chain is Receptor expression-enhancing protein 3-B (252 aa).

The next 3 helical transmembrane spans lie at 1-21 (MVSG…YPAY), 35-55 (YVRW…ETIA), and 57-77 (LTVS…VWLL). A disordered region spans residues 163–225 (ETAETRFFPD…GLRRSQSMRS (63 aa)). The segment covering 198–211 (RTDEDVEVNSEDEV) has biased composition (acidic residues).

Belongs to the DP1 family.

Its subcellular location is the endoplasmic reticulum membrane. Functionally, microtubule-binding protein required to ensure proper cell division and nuclear envelope reassembly by sequestering the endoplasmic reticulum away from chromosomes during mitosis. Probably acts by clearing the endoplasmic reticulum membrane from metaphase chromosomes. The chain is Receptor expression-enhancing protein 3-B (reep3-b) from Xenopus laevis (African clawed frog).